Reading from the N-terminus, the 310-residue chain is MGDVLEQFFILTGLLVCLACLAKCVRFSRCVLLNYWKVLPKSFLRSMGQWAVITGAGDGIGKAYSFELAKRGLNVVLISRTLEKLEAIATEIERTTGRSVKIIQADFTKDDIYEHIKEKLAGLEIGILVNNVGMLPNLLPSHFLNAPDEIQSLIHCNITSVVKMTQLILKHMESRQKGLILNISSGIALFPWPLYSMYSASKAFVCAFSKALQEEYKAKEVIIQVLTPYAVSTAMTKYLNTNVITKTADEFVKESLNYVTIGGETCGCLAHEILAGFLSLIPAWAFYSGAFQRLLLTHYVAYLKLNTKVR.

Residue Gly-48–Leu-77 participates in NADP(+) binding. Ser-185 is a binding site for substrate. The Proton acceptor role is filled by Tyr-198.

It belongs to the short-chain dehydrogenases/reductases (SDR) family. 17-beta-HSD 3 subfamily. In terms of tissue distribution, testis.

The protein resides in the endoplasmic reticulum. It catalyses the reaction a 17beta-hydroxy steroid + NADP(+) = a 17-oxo steroid + NADPH + H(+). The enzyme catalyses testosterone + NADP(+) = androst-4-ene-3,17-dione + NADPH + H(+). The catalysed reaction is 17beta-estradiol + NADP(+) = estrone + NADPH + H(+). It carries out the reaction 3beta-hydroxyandrost-5-en-17-one + NADPH + H(+) = androst-5-en-3beta,17beta-diol + NADP(+). It catalyses the reaction 17beta-hydroxy-5alpha-androstan-3-one + NADP(+) = 5alpha-androstan-3,17-dione + NADPH + H(+). The enzyme catalyses androsterone + NADPH + H(+) = 5alpha-androstane-3alpha,17beta-diol + NADP(+). The catalysed reaction is 3beta-hydroxy-5alpha-androstan-17-one + NADPH + H(+) = 5alpha-androstane-3beta,17beta-diol + NADP(+). It carries out the reaction androst-4-ene-3,11,17-trione + NADPH + H(+) = 17beta-hydroxyandrost-4-ene-3,11-dione + NADP(+). It catalyses the reaction 11beta-hydroxyandrost-4-ene-3,17-dione + NADPH + H(+) = 11beta,17beta-dihydroxyandrost-4-ene-3-one + NADP(+). The protein operates within hormone biosynthesis; testosterone biosynthesis. It functions in the pathway steroid metabolism. Functionally, catalyzes the conversion of 17-oxosteroids to 17beta-hydroxysteroids. Favors the reduction of androstenedione to testosterone. Testosterone is the key androgen driving male development and function. Uses NADPH while the two other EDH17B enzymes use NADH. Androgens such as epiandrosterone, dehydroepiandrosterone, androsterone and androstanedione are accepted as substrates and reduced at C-17. Can reduce 11-ketoandrostenedione as well as 11beta-hydroxyandrostenedione at C-17 to the respective testosterone forms. The polypeptide is 17-beta-hydroxysteroid dehydrogenase type 3 (Homo sapiens (Human)).